Reading from the N-terminus, the 245-residue chain is CTD nuclear envelope phosphatase 1B (245 aa).

Residues 7 to 29 form a helical membrane-spanning segment; sequence CLLGVRTFHGVTSRIWSFFLYIL. The region spanning 58 to 225 is the FCP1 homology domain; the sequence is NNVKRKILVL…LNLLPMLDAL (168 aa).

The protein belongs to the dullard family.

The protein resides in the endoplasmic reticulum membrane. Its subcellular location is the nucleus membrane. The catalysed reaction is O-phospho-L-seryl-[protein] + H2O = L-seryl-[protein] + phosphate. It catalyses the reaction O-phospho-L-threonyl-[protein] + H2O = L-threonyl-[protein] + phosphate. Functionally, serine/threonine protein phosphatase that may dephosphorylate and activate lipins. Lipins are phosphatidate phosphatases that catalyze the conversion of phosphatidic acid to diacylglycerol and control the metabolism of fatty acids at different levels. May indirectly modulate the lipid composition of nuclear and/or endoplasmic reticulum membranes and be required for proper nuclear membrane morphology and/or dynamics. May also indirectly regulate the production of lipid droplets and triacylglycerol. May antagonize BMP signaling. The chain is CTD nuclear envelope phosphatase 1B (ctdnep1b) from Danio rerio (Zebrafish).